A 422-amino-acid polypeptide reads, in one-letter code: tRNA(Met) cytidine acetate ligase (422 aa).

ATP is bound by residues 7–20 (ITEY…HLYH), G102, N172, and R197.

The protein belongs to the TmcAL family.

The protein resides in the cytoplasm. It catalyses the reaction cytidine(34) in elongator tRNA(Met) + acetate + ATP = N(4)-acetylcytidine(34) in elongator tRNA(Met) + AMP + diphosphate. Catalyzes the formation of N(4)-acetylcytidine (ac(4)C) at the wobble position of elongator tRNA(Met), using acetate and ATP as substrates. First activates an acetate ion to form acetyladenylate (Ac-AMP) and then transfers the acetyl group to tRNA to form ac(4)C34. The protein is tRNA(Met) cytidine acetate ligase of Halothermothrix orenii (strain H 168 / OCM 544 / DSM 9562).